The following is a 264-amino-acid chain: 3-methyl-2-oxobutanoate hydroxymethyltransferase (264 aa).

Mg(2+) is bound by residues aspartate 45 and aspartate 84. Residues 45–46 (DS), aspartate 84, and lysine 113 contribute to the 3-methyl-2-oxobutanoate site. Glutamate 115 lines the Mg(2+) pocket. Glutamate 182 functions as the Proton acceptor in the catalytic mechanism.

The protein belongs to the PanB family. In terms of assembly, homodecamer; pentamer of dimers. Mg(2+) is required as a cofactor.

Its subcellular location is the cytoplasm. It catalyses the reaction 3-methyl-2-oxobutanoate + (6R)-5,10-methylene-5,6,7,8-tetrahydrofolate + H2O = 2-dehydropantoate + (6S)-5,6,7,8-tetrahydrofolate. It functions in the pathway cofactor biosynthesis; (R)-pantothenate biosynthesis; (R)-pantoate from 3-methyl-2-oxobutanoate: step 1/2. Its function is as follows. Catalyzes the reversible reaction in which hydroxymethyl group from 5,10-methylenetetrahydrofolate is transferred onto alpha-ketoisovalerate to form ketopantoate. The polypeptide is 3-methyl-2-oxobutanoate hydroxymethyltransferase (Caldicellulosiruptor saccharolyticus (strain ATCC 43494 / DSM 8903 / Tp8T 6331)).